A 356-amino-acid polypeptide reads, in one-letter code: Fructose import permease protein FruF (356 aa).

7 helical membrane-spanning segments follow: residues 25-45, 77-97, 113-133, 180-200, 231-251, 268-290, and 308-328; these read IVAFILLVIICTIFQHDFLAL, LVISTAGIDLSVGSVMAVAGA, ILIALAVGLAIGCVNGALVSF, FILGIPANFVIAVIIVILVGL, ILFLVYAISGFLAAIAGLFAT, MYAILAVVIGGTSLLGGKFSLAG, and LGVNAEATPAFFAVVVIVICV.

This sequence belongs to the binding-protein-dependent transport system permease family. The complex is composed of an ATP-binding protein (FruK), two transmembrane proteins (FruF and FruG) and a solute-binding protein (FruE).

The protein localises to the cell membrane. Its function is as follows. Part of the high-affinity ABC transporter complex FruEKFG involved in fructose uptake. Can also transport ribose and xylose, with lower affinity. Probably responsible for the translocation of the substrate across the membrane. In Bifidobacterium longum (strain NCC 2705), this protein is Fructose import permease protein FruF.